A 270-amino-acid polypeptide reads, in one-letter code: Phthiotriol/phenolphthiotriol dimycocerosates methyltransferase (270 aa).

It belongs to the methyltransferase superfamily. Phthiotriol/phenolphthiotriol dimycocerosates methyltransferase family.

In terms of biological role, catalyzes the methylation of the lipid moiety of the intermediate compounds phthiotriol and glycosylated phenolphthiotriol dimycoserosates to form phthiocerol dimycocerosates (DIM A) and glycosylated phenolphthiocerol dimycocerosates (PGL). In Mycobacterium bovis (strain ATCC BAA-935 / AF2122/97), this protein is Phthiotriol/phenolphthiotriol dimycocerosates methyltransferase.